A 109-amino-acid polypeptide reads, in one-letter code: Putative ankyrin repeat protein L482 (109 aa).

4 ANK repeats span residues 1–26, 27–56, 57–86, and 88–109; these read YLTEISGKGHIEIVKCLVNLGANITT, NNNYAIIQASEKGHLEVVKYLVGQNANIRS, ENNLAVRLASGNGHLEVVEYLVNLGADIRS, and NNYAIQSASQNGHLEVIEYLVA.

This Acanthamoeba polyphaga (Amoeba) protein is Putative ankyrin repeat protein L482.